A 407-amino-acid polypeptide reads, in one-letter code: Lysosome-associated membrane glycoprotein 1 (407 aa).

The signal sequence occupies residues methionine 1 to glycine 21. Residues alanine 22–aspartate 189 are first lumenal domain. Topologically, residues alanine 22–asparagine 371 are lumenal. 12 N-linked (GlcNAc...) asparagine glycosylation sites follow: asparagine 32, asparagine 40, asparagine 57, asparagine 72, asparagine 79, asparagine 98, asparagine 102, asparagine 116, asparagine 125, asparagine 145, asparagine 160, and asparagine 178. Cysteines 36 and 75 form a disulfide. Cysteine 150 and cysteine 186 are oxidised to a cystine. Residues glutamate 183–proline 206 are disordered. The hinge stretch occupies residues glycine 190–glutamate 219. A compositionally biased stretch (pro residues) spans threonine 194–proline 206. Asparagine 215, asparagine 220, asparagine 233, asparagine 241, asparagine 253, asparagine 283, asparagine 297, asparagine 304, and asparagine 312 each carry an N-linked (GlcNAc...) asparagine glycan. The interval asparagine 220 to asparagine 371 is second lumenal domain. A disulfide bond links cysteine 223 and cysteine 260. Residues cysteine 328 and cysteine 365 are joined by a disulfide bond. A helical membrane pass occupies residues methionine 372–isoleucine 395. Residues glycine 396–isoleucine 407 are Cytoplasmic-facing.

It belongs to the LAMP family. As to quaternary structure, interacts with ABCB9; this interaction strongly stabilizes ABCB9 and protects ABCB9 against lysosomal degradation. Interacts with FURIN. Interacts with TMEM175; inhibiting the proton channel activity of TMEM175. Post-translationally, O- and N-glycosylated; some of the N-glycans attached to LAMP-1 are polylactosaminoglycans.

The protein localises to the lysosome membrane. The protein resides in the endosome membrane. Its subcellular location is the late endosome membrane. It localises to the cell membrane. It is found in the cytolytic granule membrane. Its function is as follows. Lysosomal membrane glycoprotein which plays an important role in lysosome biogenesis, lysosomal pH regulation, autophagy and cholesterol homeostasis. Acts as an important regulator of lysosomal lumen pH regulation by acting as a direct inhibitor of the proton channel TMEM175, facilitating lysosomal acidification for optimal hydrolase activity. Also plays an important role in NK-cells cytotoxicity. Mechanistically, participates in cytotoxic granule movement to the cell surface and perforin trafficking to the lytic granule. In addition, protects NK-cells from degranulation-associated damage induced by their own cytotoxic granule content. Presents carbohydrate ligands to selectins. This is Lysosome-associated membrane glycoprotein 1 (LAMP1) from Cricetulus griseus (Chinese hamster).